Consider the following 196-residue polypeptide: Prefoldin subunit 3 (196 aa).

Ala-2 is modified (N-acetylalanine). Lys-58 is subject to N6-acetyllysine.

This sequence belongs to the prefoldin subunit alpha family. In terms of assembly, heterohexamer of two PFD-alpha type and four PFD-beta type subunits. Binds to the C-terminal part of VHL.

The protein localises to the cytoplasm. Its subcellular location is the nucleus. In terms of biological role, binds specifically to cytosolic chaperonin (c-CPN) and transfers target proteins to it. Binds to nascent polypeptide chain and promotes folding in an environment in which there are many competing pathways for nonnative proteins. The chain is Prefoldin subunit 3 (Vbp1) from Mus musculus (Mouse).